The following is a 213-amino-acid chain: Large ribosomal subunit protein eL14 (213 aa).

Residue lysine 79 is modified to N6-acetyllysine. Lysine 85 bears the N6-acetyllysine; alternate mark. Lysine 85 bears the N6-succinyllysine; alternate mark. Residue lysine 124 forms a Glycyl lysine isopeptide (Lys-Gly) (interchain with G-Cter in SUMO2) linkage. Phosphoserine is present on serine 139. A disordered region spans residues 166-213 (TAGKKAPAQKAPAQKAAGQKAAPPPKAQKVQKPPAQKAPAPKASGEKA). The stretch at 169–173 (KKAPA) is one 1-1; approximate repeat. A 4 X 5 AA tandem repeats of Q-K-A-[APS]-X region spans residues 169 to 188 (KKAPAQKAPAQKAAGQKAAP). 5 tandem repeats follow at residues 174 to 178 (QKAPA), 179 to 183 (QKAAG), 184 to 188 (QKAAP), 191 to 193 (KAQ), and 194 to 196 (KVQ). The 2 X 3 AA tandem repeats of K-G-Q stretch occupies residues 191 to 196 (KAQKVQ). Lysine 202 is subject to N6-succinyllysine.

It belongs to the eukaryotic ribosomal protein eL14 family. As to quaternary structure, component of the large ribosomal subunit.

The protein resides in the cytoplasm. Component of the large ribosomal subunit. The ribosome is a large ribonucleoprotein complex responsible for the synthesis of proteins in the cell. This chain is Large ribosomal subunit protein eL14 (RPL14), found in Sus scrofa (Pig).